The chain runs to 107 residues: Late histone H2B.L4 (107 aa).

The O-linked (GlcNAc) serine glycan is linked to serine 94. Lysine 102 is covalently cross-linked (Glycyl lysine isopeptide (Lys-Gly) (interchain with G-Cter in ubiquitin)).

This sequence belongs to the histone H2B family. As to quaternary structure, the nucleosome is a histone octamer containing two molecules each of H2A, H2B, H3 and H4 assembled in one H3-H4 heterotetramer and two H2A-H2B heterodimers. The octamer wraps approximately 147 bp of DNA. In terms of processing, monoubiquitination gives a specific tag for epigenetic transcriptional activation and is also prerequisite for histone H3 'Lys-4' and 'Lys-79' methylation. Post-translationally, glcNAcylation at Ser-94 promotes monoubiquitination of Lys-102. It fluctuates in response to extracellular glucose, and associates with transcribed genes.

It is found in the nucleus. It localises to the chromosome. Its function is as follows. Core component of nucleosome. Nucleosomes wrap and compact DNA into chromatin, limiting DNA accessibility to the cellular machineries which require DNA as a template. Histones thereby play a central role in transcription regulation, DNA repair, DNA replication and chromosomal stability. DNA accessibility is regulated via a complex set of post-translational modifications of histones, also called histone code, and nucleosome remodeling. In Strongylocentrotus purpuratus (Purple sea urchin), this protein is Late histone H2B.L4.